A 521-amino-acid polypeptide reads, in one-letter code: Ribonuclease Y (521 aa).

The helical transmembrane segment at 5-25 (LLLILTAVIMLIVGFAVGAIL) threads the bilayer. The disordered stretch occupies residues 77–107 (ELKDRRGEVQKQENRLIQREETMDRKDATLD). In terms of domain architecture, KH spans 211-271 (TVTVVTLPND…IRREIARMTL (61 aa)). The HD domain maps to 337–430 (VLNHSIEVAK…VAASDAISAA (94 aa)).

This sequence belongs to the RNase Y family.

It is found in the cell membrane. In terms of biological role, endoribonuclease that initiates mRNA decay. This Latilactobacillus sakei subsp. sakei (strain 23K) (Lactobacillus sakei subsp. sakei) protein is Ribonuclease Y.